A 338-amino-acid polypeptide reads, in one-letter code: DNA polymerase III subunit delta (338 aa).

The protein belongs to the DNA polymerase HolA subunit family. In terms of assembly, DNA polymerase III contains a core (composed of alpha, epsilon and theta chains) that associates with a tau subunit. This core dimerizes to form the POLIII' complex. PolIII' associates with the gamma complex (composed of gamma, delta, delta', psi and chi chains) and with the beta chain to form the complete DNA polymerase III complex.

The enzyme catalyses DNA(n) + a 2'-deoxyribonucleoside 5'-triphosphate = DNA(n+1) + diphosphate. In terms of biological role, DNA polymerase III is a complex, multichain enzyme responsible for most of the replicative synthesis in bacteria. This DNA polymerase also exhibits 3' to 5' exonuclease activity. The delta subunit seems to interact with the gamma subunit to transfer the beta subunit on the DNA. This is DNA polymerase III subunit delta (holA) from Buchnera aphidicola subsp. Schizaphis graminum (strain Sg).